The following is a 427-amino-acid chain: Adenylosuccinate synthetase (427 aa).

Residues 12-18 (GDEGKGK) and 40-42 (GHT) contribute to the GTP site. Residue Asp13 is the Proton acceptor of the active site. Asp13 and Gly40 together coordinate Mg(2+). IMP contacts are provided by residues 13-16 (DEGK), 38-41 (NAGH), Thr128, Arg142, Gln223, Thr238, and Arg302. His41 acts as the Proton donor in catalysis. Position 298 to 304 (298 to 304 (TTTGRNR)) interacts with substrate. Residues Arg304, 330-332 (KLD), and 412-414 (GVG) contribute to the GTP site.

This sequence belongs to the adenylosuccinate synthetase family. Homodimer. Mg(2+) serves as cofactor.

The protein resides in the cytoplasm. The enzyme catalyses IMP + L-aspartate + GTP = N(6)-(1,2-dicarboxyethyl)-AMP + GDP + phosphate + 2 H(+). The protein operates within purine metabolism; AMP biosynthesis via de novo pathway; AMP from IMP: step 1/2. Functionally, plays an important role in the de novo pathway of purine nucleotide biosynthesis. Catalyzes the first committed step in the biosynthesis of AMP from IMP. The chain is Adenylosuccinate synthetase from Thermobifida fusca (strain YX).